A 171-amino-acid polypeptide reads, in one-letter code: Adenine phosphoribosyltransferase (171 aa).

This sequence belongs to the purine/pyrimidine phosphoribosyltransferase family. As to quaternary structure, homodimer.

It is found in the cytoplasm. It carries out the reaction AMP + diphosphate = 5-phospho-alpha-D-ribose 1-diphosphate + adenine. The protein operates within purine metabolism; AMP biosynthesis via salvage pathway; AMP from adenine: step 1/1. Its function is as follows. Catalyzes a salvage reaction resulting in the formation of AMP, that is energically less costly than de novo synthesis. This Rhodospirillum rubrum (strain ATCC 11170 / ATH 1.1.1 / DSM 467 / LMG 4362 / NCIMB 8255 / S1) protein is Adenine phosphoribosyltransferase.